We begin with the raw amino-acid sequence, 486 residues long: Uridine/cytidine kinase UKL1, chloroplastic (486 aa).

A chloroplast-targeting transit peptide spans methionine 1–serine 47. The span at serine 31–serine 54 shows a compositional bias: low complexity. Residues serine 31–valine 67 form a disordered region. The segment at proline 59 to glycine 264 is uridine kinase. Residues asparagine 274–glutamine 486 form a uracil phosphoribosyltransferase region. GTP contacts are provided by residues lysine 298, arginine 307, and cysteine 341–leucine 344. 5-phospho-alpha-D-ribose 1-diphosphate-binding residues include arginine 351 and arginine 376. Arginine 396 lines the GTP pocket. Residues aspartate 402, threonine 407 to serine 410, and glutamate 473 contribute to the 5-phospho-alpha-D-ribose 1-diphosphate site. Glycine 472–phenylalanine 474 contributes to the uracil binding site.

This sequence in the N-terminal section; belongs to the uridine kinase family. It in the C-terminal section; belongs to the UPRTase family. Expressed in roots, leaves and stems.

It is found in the plastid. Its subcellular location is the chloroplast. It localises to the cytoplasm. It catalyses the reaction cytidine + ATP = CMP + ADP + H(+). The enzyme catalyses uridine + ATP = UMP + ADP + H(+). It participates in pyrimidine metabolism; CTP biosynthesis via salvage pathway; CTP from cytidine: step 1/3. It functions in the pathway pyrimidine metabolism; UMP biosynthesis via salvage pathway; UMP from uridine: step 1/1. In terms of biological role, involved in the pyrimidine salvage pathway. Phosphorylates uridine to uridine monophosphate (UMP). Phosphorylates cytidine to cytidine monophosphate (CMP). Does not possess uracil phosphoribosyltransferase (UPRTase) activity that catalyzes the conversion of uracil and 5-phospho-alpha-D-ribose 1-diphosphate (PRPP) to UMP and diphosphate. This Arabidopsis thaliana (Mouse-ear cress) protein is Uridine/cytidine kinase UKL1, chloroplastic.